A 184-amino-acid chain; its full sequence is Mitochondrial translation release factor in rescue (184 aa).

A mitochondrion-targeting transit peptide spans 1-98; the sequence is MSSRSTWALL…HVPSGIVVKC (98 aa). The interval 60–124 is GGQ domain; it reads ESELEEQFVK…LQEKVDVFYN (65 aa). Positions 74–76 match the GGQ motif; that stretch reads GGQ. Residue Gln-76 is modified to N5-methylglutamine. Residues 130 to 178 adopt a coiled-coil conformation; that stretch reads VHKEKLEAERRKRERKKRAKETLEKKKLLKELREASQNITEKKADADGI. The disordered stretch occupies residues 132–184; it reads KEKLEAERRKRERKKRAKETLEKKKLLKELREASQNITEKKADADGIPRGFQE. A compositionally biased stretch (basic and acidic residues) spans 149–184; the sequence is KETLEKKKLLKELREASQNITEKKADADGIPRGFQE.

Belongs to the prokaryotic/mitochondrial release factor family. In terms of assembly, interacts (via C-terminus) with MTRES1 (via S4 domain). Associates with mitoribosomal S39 large subunit, peptidyl tRNA and nascent chain. Methylation of glutamine in the GGQ triplet by HEMK1.

It is found in the mitochondrion. Functionally, part of a mitoribosome-associated quality control pathway that prevents aberrant translation by responding to interruptions during elongation. As heterodimer with MTRES1, ejects the unfinished nascent chain and peptidyl transfer RNA (tRNA), respectively, from stalled ribosomes. Recruitment of mitoribosome biogenesis factors to these quality control intermediates suggests additional roles for MTRES1 and MTRF during mitoribosome rescue. This is Mitochondrial translation release factor in rescue from Mus musculus (Mouse).